The chain runs to 118 residues: Large ribosomal subunit protein bL20 (118 aa).

It belongs to the bacterial ribosomal protein bL20 family.

Its function is as follows. Binds directly to 23S ribosomal RNA and is necessary for the in vitro assembly process of the 50S ribosomal subunit. It is not involved in the protein synthesizing functions of that subunit. In Fervidobacterium nodosum (strain ATCC 35602 / DSM 5306 / Rt17-B1), this protein is Large ribosomal subunit protein bL20.